The chain runs to 337 residues: Palmitoyltransferase ZDHHC15 (337 aa).

Residues 1–20 (MRRGWKMALSGGLRCCRRVL) are Cytoplasmic-facing. The helical transmembrane segment at 21–41 (SWVPVLVIVLVVLWSYYAYVF) threads the bilayer. At 42–56 (ELCLVTVLSPAEKVI) the chain is on the lumenal side. A helical transmembrane segment spans residues 57-77 (YLILYHAIFVFFAWTYWKSIF). Residues 78–172 (TLPQQPNQKF…NNCIGFSNYK (95 aa)) lie on the Cytoplasmic side of the membrane. Residues 129–179 (RFCDRCHLIKPDRCHHCSVCAMCVLKMDHHCPWVNNCIGFSNYKFFLQFLA) form the DHHC domain. Positions 131, 134, 144, 145, 148, 151, and 158 each coordinate Zn(2+). The active-site S-palmitoyl cysteine intermediate is Cys-159. Residue Cys-165 participates in Zn(2+) binding. Residues 173–193 (FFLQFLAYSVLYCLYIATTVF) form a helical membrane-spanning segment. At 194–210 (SYFIKYWRGELPSVRSK) the chain is on the lumenal side. The chain crosses the membrane as a helical span at residues 211 to 234 (FHVLFLLFVACMFFVSLVILFGYH). At 235 to 337 (CWLVSRNKTT…LSSLAVESET (103 aa)) the chain is on the cytoplasmic side. The interval 293–337 (HSFPMRSMNESQNPLLANEEPWEDNEDESQDYPEGLSSLAVESET) is disordered. The segment covering 312-323 (EPWEDNEDESQD) has biased composition (acidic residues).

The protein belongs to the DHHC palmitoyltransferase family. In terms of processing, autopalmitoylated (in vitro). As to expression, in brain, expressed in both excitatory and inhibitory neurons but not expressed by glial cells.

The protein localises to the golgi apparatus membrane. Its subcellular location is the postsynaptic density. It catalyses the reaction L-cysteinyl-[protein] + hexadecanoyl-CoA = S-hexadecanoyl-L-cysteinyl-[protein] + CoA. The enzyme catalyses L-cysteinyl-[protein] + tetradecanoyl-CoA = S-tetradecanoyl-L-cysteinyl-[protein] + CoA. It carries out the reaction L-cysteinyl-[protein] + octadecanoyl-CoA = S-octadecanoyl-L-cysteinyl-[protein] + CoA. Functionally, palmitoyltransferase that catalyzes the addition of palmitate onto various protein substrates. Has no stringent fatty acid selectivity and in addition to palmitate can also transfer onto target proteins myristate from tetradecanoyl-CoA and stearate from octadecanoyl-CoA. Palmitoylates IGF2R and SORT1, promoting their partitioning to an endosomal membrane subdomain where they can interact with the retromer cargo-selective complex. Thereby, regulates retrograde transport from endosomes to the Golgi apparatus of these lysosomal sorting receptors and plays a role in trafficking of lysosomal proteins. In the nervous system, catalyzes the palmitoylation of DLG4/PSD95 and regulates its synaptic clustering and function in synaptogenesis. Could be involved in the differentiation of dopaminergic neurons and the development of the diencephalon. Could also catalyze the palmitoylation of GAP43. Could also palmitoylate DNAJC5 and regulate its localization to the Golgi membrane. Could also palmitoylate FYN as shown in vitro. May palmitoylate CALHM3 subunit of gustatory voltage-gated ion channels and modulate channel gating and kinetics. This chain is Palmitoyltransferase ZDHHC15, found in Rattus norvegicus (Rat).